Consider the following 182-residue polypeptide: Ribosome-recycling factor (182 aa).

Belongs to the RRF family.

It localises to the cytoplasm. Responsible for the release of ribosomes from messenger RNA at the termination of protein biosynthesis. May increase the efficiency of translation by recycling ribosomes from one round of translation to another. The protein is Ribosome-recycling factor of Cyanothece sp. (strain PCC 7425 / ATCC 29141).